Here is a 41-residue protein sequence, read N- to C-terminus: Antimicrobial protein PN-AMP1 (41 aa).

Gln1 is subject to Pyrrolidone carboxylic acid. In terms of domain architecture, Chitin-binding type-1 spans 1–41 (QQCGRQASGRLCGNRLCCSQWGYCGSTASYCGAGCQSQCRS). 4 disulfides stabilise this stretch: Cys3–Cys18, Cys12–Cys24, Cys17–Cys31, and Cys35–Cys39.

Functionally, chitin-binding protein with a defensive function against numerous chitin containing fungal pathogens. It is also an inhibitor of Gram-positive bacteria such as B.subtilis. The polypeptide is Antimicrobial protein PN-AMP1 (Ipomoea nil (Japanese morning glory)).